A 475-amino-acid chain; its full sequence is Glycogen synthase (475 aa).

ADP-alpha-D-glucose is bound at residue Lys15.

This sequence belongs to the glycosyltransferase 1 family. Bacterial/plant glycogen synthase subfamily.

It catalyses the reaction [(1-&gt;4)-alpha-D-glucosyl](n) + ADP-alpha-D-glucose = [(1-&gt;4)-alpha-D-glucosyl](n+1) + ADP + H(+). The protein operates within glycan biosynthesis; glycogen biosynthesis. Synthesizes alpha-1,4-glucan chains using ADP-glucose. The polypeptide is Glycogen synthase (Anaeromyxobacter sp. (strain K)).